Consider the following 72-residue polypeptide: Translation initiation factor IF-1 (72 aa).

The S1-like domain maps to 1-72; the sequence is MAKDDVIEID…DKGRITFRYK (72 aa).

Belongs to the IF-1 family. Component of the 30S ribosomal translation pre-initiation complex which assembles on the 30S ribosome in the order IF-2 and IF-3, IF-1 and N-formylmethionyl-tRNA(fMet); mRNA recruitment can occur at any time during PIC assembly.

It localises to the cytoplasm. Its function is as follows. One of the essential components for the initiation of protein synthesis. Stabilizes the binding of IF-2 and IF-3 on the 30S subunit to which N-formylmethionyl-tRNA(fMet) subsequently binds. Helps modulate mRNA selection, yielding the 30S pre-initiation complex (PIC). Upon addition of the 50S ribosomal subunit IF-1, IF-2 and IF-3 are released leaving the mature 70S translation initiation complex. The chain is Translation initiation factor IF-1 from Campylobacter jejuni subsp. doylei (strain ATCC BAA-1458 / RM4099 / 269.97).